We begin with the raw amino-acid sequence, 187 residues long: Elongation factor P (187 aa).

This sequence belongs to the elongation factor P family.

The protein localises to the cytoplasm. It functions in the pathway protein biosynthesis; polypeptide chain elongation. In terms of biological role, involved in peptide bond synthesis. Stimulates efficient translation and peptide-bond synthesis on native or reconstituted 70S ribosomes in vitro. Probably functions indirectly by altering the affinity of the ribosome for aminoacyl-tRNA, thus increasing their reactivity as acceptors for peptidyl transferase. This Helicobacter pylori (strain P12) protein is Elongation factor P.